We begin with the raw amino-acid sequence, 30 residues long: Bacteriocin SRCAM 37 (30 aa).

The protein belongs to the bacteriocin class IIA/YGNGV family.

Its subcellular location is the secreted. In terms of biological role, bacteriocin with antibacterial activity against C.jejuni. The polypeptide is Bacteriocin SRCAM 37 (Paenibacillus polymyxa (Bacillus polymyxa)).